Consider the following 239-residue polypeptide: 1-(5-phosphoribosyl)-5-[(5-phosphoribosylamino)methylideneamino] imidazole-4-carboxamide isomerase (239 aa).

Residue aspartate 8 is the Proton acceptor of the active site. Aspartate 129 acts as the Proton donor in catalysis.

This sequence belongs to the HisA/HisF family.

The protein resides in the cytoplasm. It catalyses the reaction 1-(5-phospho-beta-D-ribosyl)-5-[(5-phospho-beta-D-ribosylamino)methylideneamino]imidazole-4-carboxamide = 5-[(5-phospho-1-deoxy-D-ribulos-1-ylimino)methylamino]-1-(5-phospho-beta-D-ribosyl)imidazole-4-carboxamide. Its pathway is amino-acid biosynthesis; L-histidine biosynthesis; L-histidine from 5-phospho-alpha-D-ribose 1-diphosphate: step 4/9. The chain is 1-(5-phosphoribosyl)-5-[(5-phosphoribosylamino)methylideneamino] imidazole-4-carboxamide isomerase from Bacillus cereus (strain B4264).